The primary structure comprises 241 residues: 3-deoxy-D-manno-octulosonic acid kinase (241 aa).

D171 is an active-site residue.

It belongs to the protein kinase superfamily. KdkA/RfaP family.

The protein localises to the cell inner membrane. It carries out the reaction an alpha-Kdo-(2-&gt;6)-lipid IVA + ATP = a 4-O-phospho-alpha-Kdo-(2-&gt;6)-lipid IVA + ADP + H(+). It functions in the pathway bacterial outer membrane biogenesis; LPS core biosynthesis. Its function is as follows. Catalyzes the ATP-dependent phosphorylation of the 3-deoxy-D-manno-octulosonic acid (Kdo) residue in Kdo-lipid IV(A) at the 4-OH position. In Haemophilus influenzae (strain PittGG), this protein is 3-deoxy-D-manno-octulosonic acid kinase.